Here is a 95-residue protein sequence, read N- to C-terminus: Aspartyl/glutamyl-tRNA(Asn/Gln) amidotransferase subunit C (95 aa).

This sequence belongs to the GatC family. Heterotrimer of A, B and C subunits.

The catalysed reaction is L-glutamyl-tRNA(Gln) + L-glutamine + ATP + H2O = L-glutaminyl-tRNA(Gln) + L-glutamate + ADP + phosphate + H(+). It carries out the reaction L-aspartyl-tRNA(Asn) + L-glutamine + ATP + H2O = L-asparaginyl-tRNA(Asn) + L-glutamate + ADP + phosphate + 2 H(+). Its function is as follows. Allows the formation of correctly charged Asn-tRNA(Asn) or Gln-tRNA(Gln) through the transamidation of misacylated Asp-tRNA(Asn) or Glu-tRNA(Gln) in organisms which lack either or both of asparaginyl-tRNA or glutaminyl-tRNA synthetases. The reaction takes place in the presence of glutamine and ATP through an activated phospho-Asp-tRNA(Asn) or phospho-Glu-tRNA(Gln). The polypeptide is Aspartyl/glutamyl-tRNA(Asn/Gln) amidotransferase subunit C (Chlorobium limicola (strain DSM 245 / NBRC 103803 / 6330)).